Consider the following 243-residue polypeptide: Adenylate dimethylallyltransferase (243 aa).

It catalyses the reaction dimethylallyl diphosphate + AMP = N(6)-(dimethylallyl)adenosine 5'-phosphate + diphosphate. In terms of biological role, transfers dimethylallyl groups to AMP as part of the biosynthesis of cytokinin phytohormones. In Agrobacterium fabrum (strain C58 / ATCC 33970) (Agrobacterium tumefaciens (strain C58)), this protein is Adenylate dimethylallyltransferase (tzs).